The chain runs to 785 residues: Endonuclease MutS2 (785 aa).

335-342 (GPNTGGKT) contacts ATP. In terms of domain architecture, Smr spans 710-785 (LDLRGERYEN…GSGVTIVELK (76 aa)).

The protein belongs to the DNA mismatch repair MutS family. MutS2 subfamily. As to quaternary structure, homodimer. Binds to stalled ribosomes, contacting rRNA.

In terms of biological role, endonuclease that is involved in the suppression of homologous recombination and thus may have a key role in the control of bacterial genetic diversity. Acts as a ribosome collision sensor, splitting the ribosome into its 2 subunits. Detects stalled/collided 70S ribosomes which it binds and splits by an ATP-hydrolysis driven conformational change. Acts upstream of the ribosome quality control system (RQC), a ribosome-associated complex that mediates the extraction of incompletely synthesized nascent chains from stalled ribosomes and their subsequent degradation. Probably generates substrates for RQC. This is Endonuclease MutS2 from Bacillus velezensis (strain DSM 23117 / BGSC 10A6 / LMG 26770 / FZB42) (Bacillus amyloliquefaciens subsp. plantarum).